Consider the following 247-residue polypeptide: MVRRVKTGIPGMDEILHGGIPERNVVLLSGGPGTGKSIFSQQFLWNGLQMGEPGIYVALEEHPVQVRQNMAQFGWDVRKYEEEGLFAMVDAFTAGVGKSKEYEKYIVHDLTDIREFIEVLRQAIRDINAKRVVVDSVTTLYINKPAMARSIILQLKRVLAGTGCTSIFVSQISVGERGFGGPGVEHGVDGIIRLDLDEIDGELKRSLIVWKMRGTSHSMKRHPFDITDKGIIVYPDKVLKRGRIYEL.

Positions R3–L247 constitute a KaiC domain. G30–S37 lines the ATP pocket.

This sequence belongs to the UPF0273 family.

In Pyrococcus furiosus (strain ATCC 43587 / DSM 3638 / JCM 8422 / Vc1), this protein is UPF0273 protein PF1931.